A 329-amino-acid chain; its full sequence is Flotillin-like protein FloA (329 aa).

The next 2 helical transmembrane spans lie at 6–26 (FIVI…FVPI) and 27–47 (GLWI…LVGM).

This sequence belongs to the flotillin-like FloA family. Homooligomerizes.

It is found in the cell membrane. The protein localises to the membrane raft. Found in functional membrane microdomains (FMM) that may be equivalent to eukaryotic membrane rafts. FMMs are highly dynamic and increase in number as cells age. Flotillins are thought to be important factors in membrane fluidity. The polypeptide is Flotillin-like protein FloA (Staphylococcus aureus (strain JH1)).